A 146-amino-acid chain; its full sequence is MVMGLHLLFLVFILGLGLTPPTLAQNDLRYNRFLEEHYDPKTKNGNDRYCDKMMRLRNMISPCKAINTFIHGKKESIKAICGTENGVPYNGNKRKSKSAFQVTICKHRGGSPRPPCQYRATAGSRNVVVACENGLPVHLDESIFRP.

An N-terminal signal peptide occupies residues 1 to 24; the sequence is MVMGLHLLFLVFILGLGLTPPTLA. Gln25 carries the post-translational modification Pyrrolidone carboxylic acid. The Proton acceptor role is filled by His37. Cystine bridges form between Cys50/Cys105, Cys63/Cys116, and Cys81/Cys131. The Nucleolar localization signal signature appears at 55–59; sequence RLRNM. 2 residues coordinate tRNA: Cys105 and Val127. His138 functions as the Proton donor in the catalytic mechanism.

It belongs to the pancreatic ribonuclease family. In terms of assembly, homodimer. Interacts with RNH1; inhibiting ANG ribonuclease activity. Interacts with PCNA.

Its subcellular location is the secreted. The protein localises to the nucleus. It localises to the nucleolus. It is found in the cytoplasm. The protein resides in the stress granule. With respect to regulation, has weak tRNA ribonuclease activity by itself due to partial autoinhibition by its C-terminus, which folds into a short alpha-helix that partially occludes the substrate-binding site. In absence of stress, the ribonuclease activity is inhibited by RNH1 in the cytoplasm. In response to stress, dissociates from RNH1 in the cytoplasm and associates with cytoplasmic ribosomes with vacant A-sites: ribosomes directly activate the tRNA ribonuclease activity of ANG by refolding the C-terminal alpha-helix. In response to stress, the angiogenic activity of ANG is inhibited by RNH1 in the nucleus. Secreted ribonuclease that can either promote or restrict cell proliferation of target cells, depending on the context. Endocytosed in target cells via its receptor PLXNB2 and translocates to the cytoplasm or nucleus. Under stress conditions, localizes to the cytoplasm and promotes the assembly of stress granules (SGs): specifically cleaves a subset of tRNAs within anticodon loops to produce tRNA-derived stress-induced fragments (tiRNAs), resulting in translation repression and inhibition of cell proliferation. tiRNas also prevent formation of apoptosome, thereby promoting cell survival. Preferentially cleaves RNAs between a pyrimidine and an adenosine residue, suggesting that it cleaves the anticodon loop of tRNA(Ala) (32-UUAGCAU-38) after positions 33 and 36. Cleaves a subset of tRNAs, including tRNA(Ala), tRNA(Glu), tRNA(Gly), tRNA(Lys), tRNA(Val), tRNA(His), tRNA(Asp) and tRNA(Sec). Under growth conditions and in differentiated cells, translocates to the nucleus and stimulates ribosomal RNA (rRNA) transcription, including that containing the initiation site sequences of 45S rRNA, thereby promoting cell growth and proliferation. Angiogenin induces vascularization of normal and malignant tissues via its ability to promote rRNA transcription. Involved in hematopoietic stem and progenitor cell (HSPC) growth and survival by promoting rRNA transcription in growth conditions and inhibiting translation in response to stress, respectively. Mediates the crosstalk between myeloid and intestinal epithelial cells to protect the intestinal epithelial barrier integrity: secreted by myeloid cells and promotes intestinal epithelial cells proliferation and survival. Also mediates osteoclast-endothelial cell crosstalk in growing bone: produced by osteoclasts and protects the neighboring vascular cells against senescence by promoting rRNA transcription. The polypeptide is Angiogenin (ANG) (Saguinus oedipus (Cotton-top tamarin)).